Consider the following 132-residue polypeptide: Pre-histone-like nucleoprotein (132 aa).

A propeptide spanning residues 2 to 23 (AILISPSNNTGWGLGTHKLFGG) is cleaved from the precursor. The Nuclear localization signal motif lies at 124 to 132 (RRKRRVRSK).

It belongs to the adenoviridae histone-like nucleoprotein family. Interacts with the core-capsid bridging protein; this interaction bridges the virus core to the capsid. Interacts with host NPM1; this interaction might play a role in placing the pre-histone-like nucleoprotein on the viral DNA or regulating viral gene expression. Interacts with host HMGB1; this interaction inhibits host immune response. Post-translationally, cleaved near the N-terminus by the viral protease during virion maturation to form the mature protein.

It is found in the virion. The protein localises to the host nucleus. The protein resides in the host nucleolus. In terms of biological role, plays a role in the inhibition of host immune response within the nucleus. Interacts with cellular nucleosomes and immobilizes the host immune danger signal HMGB1 on chromatin. In turn, prevents HMGB1 release out of the cell and thus decreases inflammation. Also plays a role in the wrapping and condensation of the viral DNA. May also promote viral genome import into the nucleus. In Canine adenovirus serotype 1 (strain RI261) (CAdV-1), this protein is Pre-histone-like nucleoprotein.